The primary structure comprises 291 residues: Lipoyl synthase (291 aa).

Positions 36, 41, 47, 62, 66, 69, and 275 each coordinate [4Fe-4S] cluster. A Radical SAM core domain is found at 48–264; sequence FSKKTATFLI…KEFAISIGFK (217 aa).

This sequence belongs to the radical SAM superfamily. Lipoyl synthase family. The cofactor is [4Fe-4S] cluster.

The protein resides in the cytoplasm. The enzyme catalyses [[Fe-S] cluster scaffold protein carrying a second [4Fe-4S](2+) cluster] + N(6)-octanoyl-L-lysyl-[protein] + 2 oxidized [2Fe-2S]-[ferredoxin] + 2 S-adenosyl-L-methionine + 4 H(+) = [[Fe-S] cluster scaffold protein] + N(6)-[(R)-dihydrolipoyl]-L-lysyl-[protein] + 4 Fe(3+) + 2 hydrogen sulfide + 2 5'-deoxyadenosine + 2 L-methionine + 2 reduced [2Fe-2S]-[ferredoxin]. Its pathway is protein modification; protein lipoylation via endogenous pathway; protein N(6)-(lipoyl)lysine from octanoyl-[acyl-carrier-protein]: step 2/2. Functionally, catalyzes the radical-mediated insertion of two sulfur atoms into the C-6 and C-8 positions of the octanoyl moiety bound to the lipoyl domains of lipoate-dependent enzymes, thereby converting the octanoylated domains into lipoylated derivatives. This is Lipoyl synthase from Caldicellulosiruptor bescii (strain ATCC BAA-1888 / DSM 6725 / KCTC 15123 / Z-1320) (Anaerocellum thermophilum).